Here is a 321-residue protein sequence, read N- to C-terminus: Cyclic AMP-AMP-AMP synthase (321 aa).

K63 serves as a coordination point for ATP. 2 residues coordinate Mg(2+): D72 and D74. Residues D74, H162, K185, K201–F203, and N270 each bind ATP.

It belongs to the CD-NTase family. A01 subfamily. In terms of assembly, forms complexes with Cap7 with 1:1 and 2:2 stoichimetry, and a 1:1:6 CdnC:Cap7:Cap6 complex. Requires Mg(2+) as cofactor.

It carries out the reaction 3 ATP = 3',3',3'-c-tri-AMP + 3 diphosphate. The enzyme catalyses 2 ATP = 3',3'-c-di-AMP + 2 diphosphate. With respect to regulation, the 2:2 CdnC:Cap7 (Cap7 is also called HORMA) complex is activated for cAAA synthesis by long dsDNA, but not 40 bp dsDNA or ssDNA; the 1:1 complex is inactive in vitro. The 2:2:DNA complex is catalytically disassembled and inactivated by Cap6 (also called Trip13). In terms of biological role, cyclic nucleotide synthase (second messenger synthase) of a CBASS antivirus system. CBASS (cyclic oligonucleotide-based antiphage signaling system) provides immunity against bacteriophage. The CD-NTase protein synthesizes cyclic nucleotides in response to infection; these serve as specific second messenger signals. The signals activate a diverse range of effectors, leading to bacterial cell death and thus abortive phage infection. A type III-C(AAA) CBASS system. Functionally, cyclic nucleotide synthase that upon activation catalyzes the synthesis of 3',3',3'-cyclic AMP-AMP-AMP (3',3',3'-c-tri-AMP or cAAA) as the major product, and 3',3'-c-di-AMP as a minor product. Cannot use GTP as a substrate. Its function is as follows. Protects E.coli strain JP313 against bacteriophage lambda cI- infection. When the cdnC-cap7-cap6-nucC operon is transformed into a susceptible strain it confers bacteriophage immunity. Mutations in the sensor (Cap7 also called HORMA) or effector proteins (CdnC, NucC) but not the disassembly protein (Cap6 also called Trip13) no longer confer immunity. The presence of the intact operon leads to culture collapse and cell death, which occurs before the phage has finished its replication cycle, thus protecting non-infected bacteria by aborting the phage infection and preventing its propagation. The sequence is that of Cyclic AMP-AMP-AMP synthase from Escherichia coli (strain MS 115-1).